A 232-amino-acid polypeptide reads, in one-letter code: 2-C-methyl-D-erythritol 4-phosphate cytidylyltransferase (232 aa).

This sequence belongs to the IspD/TarI cytidylyltransferase family. IspD subfamily.

The enzyme catalyses 2-C-methyl-D-erythritol 4-phosphate + CTP + H(+) = 4-CDP-2-C-methyl-D-erythritol + diphosphate. It participates in isoprenoid biosynthesis; isopentenyl diphosphate biosynthesis via DXP pathway; isopentenyl diphosphate from 1-deoxy-D-xylulose 5-phosphate: step 2/6. Functionally, catalyzes the formation of 4-diphosphocytidyl-2-C-methyl-D-erythritol from CTP and 2-C-methyl-D-erythritol 4-phosphate (MEP). This chain is 2-C-methyl-D-erythritol 4-phosphate cytidylyltransferase, found in Nitrosospira multiformis (strain ATCC 25196 / NCIMB 11849 / C 71).